The following is a 788-amino-acid chain: Protein HHLF1 (788 aa).

Disordered regions lie at residues 1–82 (MAQR…NFWH), 366–385 (TGTA…ETEA), and 609–663 (IHKK…SRLP). Over residues 16–25 (RGRGAGGPSG) the composition is skewed to gly residues. Over residues 26-56 (VGSSPPSSCVPMGAPSTAGTGASAAATTTPG) the composition is skewed to low complexity. The segment at 74–248 (SGNNSNFWHG…HGAGEVVRLY (175 aa)) is RNA-binding. Residues 650-659 (LRRDDEDWKP) show a composition bias toward basic and acidic residues. The tract at residues 671–788 (LDETFWVLGS…IATHYHYNAQ (118 aa)) is interaction with host EIF2AK2/PKR.

This sequence belongs to the herpesviridae US22 family. In terms of assembly, interacts with host EIF2AK2/PKR; this interaction retains EIF2AK2 to the host nucleus and prevents its activation. Interaction (via N-terminus) with host BECN1; this interaction inhibits host autophagy. Interacts with the viral DNA polymerase accessory subunit UL44. Interacts with host HSPA5.

The protein resides in the virion. The protein localises to the host cytoplasm. It is found in the host nucleus. Its function is as follows. Inhibits the establishment of the antiviral state and the integrated stress response (ISR) in the infected cell. Prevents the phosphorylation of the host eukaryotic translation initiation factor eIF-2alpha/EIF2S1 and thus the shutoff of viral and cellular protein synthesis by directly interacting with EIF2AK2/PKR. Prevents stress granule formation in response to eIF-2alpha/EIF2S1 phosphorylation, thereby rescuing viral replication and protein synthesis. Also inhibits host autophagy by interacting with host Beclin-1/BECN1. This Homo sapiens (Human) protein is Protein HHLF1 (TRS1).